A 623-amino-acid chain; its full sequence is DELLA protein RHT-1 (623 aa).

The segment at 1-27 is disordered; the sequence is MKREYQDAGGSGGGGGGMGSSEDKMMV. The segment covering 9–19 has biased composition (gly residues); it reads GGSGGGGGGMG. The DELLA motif signature appears at 38–42; sequence DELLA. Disordered stretches follow at residues 109–138 and 159–201; these read LNAP…GYFD and AGAT…GARS. Pro residues predominate over residues 111–120; the sequence is APPPPLPPAP. Low complexity-rich tracts occupy residues 121–131 and 181–201; these read QLNASTSSTVT and GGSS…GARS. Positions 225–619 constitute a GRAS domain; it reads VDTQEAGIRL…RPLIATSAWR (395 aa). Residues 232–288 are leucine repeat I (LRI); that stretch reads IRLVHALLACAEAVQQENLSAAEALVKQIPLLAASQGGAMRKVAAYFGEALARRVFR. A LxCxE motif motif is present at residues 239-243; that stretch reads LACAE. The interval 307–372 is VHIID; it reads HAHFYESCPY…GGPPSFRLTG (66 aa). Residues 338–342 carry the VHIID motif; the sequence is VHVVD. Residues 386–425 are leucine repeat II (LRII); the sequence is QVGWKLAQFAHTIRVDFQYRGLVAATLADLEPFMLQPEGE. Positions 435–540 are PFYRE; the sequence is IAVNSVFEMH…EVYLGRQICN (106 aa). The interval 543–619 is SAW; that stretch reads ACEGAERTER…RPLIATSAWR (77 aa).

This sequence belongs to the GRAS family. DELLA subfamily. Phosphorylated. In terms of processing, ubiquitinated. Upon GA application it is ubiquitinated, leading to its subsequent degradation.

It is found in the nucleus. Its function is as follows. Probable transcriptional regulator that acts as a repressor of the gibberellin (GA) signaling pathway. Probably acts by participating in large multiprotein complexes that repress transcription of GA-inducible genes. Upon GA application, it is degraded by the proteasome, allowing the GA signaling pathway. This chain is DELLA protein RHT-1 (RHT1), found in Triticum aestivum (Wheat).